A 295-amino-acid polypeptide reads, in one-letter code: G1/S-specific cyclin-D1 (295 aa).

Residues leucine 28–leucine 152 enclose the Cyclin N-terminal domain. Residue lysine 269 forms a Glycyl lysine isopeptide (Lys-Gly) (interchain with G-Cter in ubiquitin) linkage. A disordered region spans residues lysine 269–isoleucine 295. Threonine 286 carries the phosphothreonine modification.

Belongs to the cyclin family. Cyclin D subfamily. Interacts with either CDK4 or CDK6 protein kinase to form a serine/threonine kinase holoenzyme complex. The cyclin subunit imparts substrate specificity to the complex. Component of the ternary complex CCND1/CDK4/CDKN1B required for nuclear translocation and modulation of CDK4-mediated kinase activity. Interacts directly with CDKN1B. Can form similar complexes with either CDKN1A or CDKN2A. Interacts with UHRF2; the interaction ubiquitinates CCND1 and appears to occur independently of phosphorylation. Interacts with USP2. Interacts (via cyclin N-terminal domain) with INSM1 (via N-terminal region); the interaction competes with the binding of CCND1 to CDK4 during cell cycle progression and inhibits CDK4 activity. Interacts with CDK4; the interaction is prevented with the binding of CCND1 to INSM1 during cell cycle progression. In terms of processing, phosphorylation at Thr-286 by MAP kinases is required for ubiquitination and degradation by the DCX(AMBRA1) complex. It also plays an essential role for recognition by the FBXO31 component of SCF (SKP1-cullin-F-box) protein ligase complex following DNA damage. Post-translationally, ubiquitinated at Lys-269 by the DCX(AMBRA1) complex during the transition from G1 to S cell phase, leading to its degradation: ubiquitination is dependent on Thr-286 phosphorylation. The DCX(AMBRA1) complex represents the major regulator of CCND1 stability during the G1/S transition. Also ubiquitinated by the SCF(FBXO4) and Cul7-RING(FBXW8) ubiquitin-protein ligase complexes. Following DNA damage it is ubiquitinated by the SCF(FBXO31) protein ligase complex. SCF(FBXO31) ubiquitination is dependent on Thr-286 phosphorylation. Ubiquitinated also by UHRF2 apparently in a phosphorylation-independent manner. Ubiquitination leads to its degradation and G1 arrest. Deubiquitinated by USP2; leading to its stabilization.

The protein resides in the nucleus. The protein localises to the cytoplasm. It is found in the nucleus membrane. Functionally, regulatory component of the cyclin D1-CDK4 (DC) complex that phosphorylates and inhibits members of the retinoblastoma (RB) protein family including RB1 and regulates the cell-cycle during G(1)/S transition. Phosphorylation of RB1 allows dissociation of the transcription factor E2F from the RB/E2F complex and the subsequent transcription of E2F target genes which are responsible for the progression through the G(1) phase. Hypophosphorylates RB1 in early G(1) phase. Cyclin D-CDK4 complexes are major integrators of various mitogenenic and antimitogenic signals. Also a substrate for SMAD3, phosphorylating SMAD3 in a cell-cycle-dependent manner and repressing its transcriptional activity. Component of the ternary complex, cyclin D1/CDK4/CDKN1B, required for nuclear translocation and activity of the cyclin D-CDK4 complex. Exhibits transcriptional corepressor activity with INSM1 on the NEUROD1 and INS promoters in a cell cycle-independent manner. This is G1/S-specific cyclin-D1 (Ccnd1) from Rattus norvegicus (Rat).